The sequence spans 200 residues: SKP1-like protein 19 (200 aa).

Positions 67–92 (DDVVETHESSTKGDKTVEEAKKKPDD) are enriched in basic and acidic residues. Residues 67-109 (DDVVETHESSTKGDKTVEEAKKKPDDVAVPESTEGDDEAEDKK) form a disordered region. Residues 132–190 (ILAANYLNVQGLFDLCSKTIADYIKDMTPEEVRELFNIENDFTPEEEEAIRNENAWTFE) form an interaction with the F-box domain of F-box proteins region.

Belongs to the SKP1 family. As to quaternary structure, part of a SCF (SKP1-cullin-F-box) protein ligase complex. Interacts with CPR1/CPR30. Expressed in leaves and flowers.

The protein resides in the nucleus. The protein operates within protein modification; protein ubiquitination. Functionally, involved in ubiquitination and subsequent proteasomal degradation of target proteins. Together with CUL1, RBX1 and a F-box protein, it forms a SCF E3 ubiquitin ligase complex. The functional specificity of this complex depends on the type of F-box protein. In the SCF complex, it serves as an adapter that links the F-box protein to CUL1. The chain is SKP1-like protein 19 (ASK19) from Arabidopsis thaliana (Mouse-ear cress).